The following is a 422-amino-acid chain: Enolase (422 aa).

Gln162 lines the (2R)-2-phosphoglycerate pocket. Residue Glu204 is the Proton donor of the active site. Residues Asp241, Glu284, and Asp311 each contribute to the Mg(2+) site. (2R)-2-phosphoglycerate contacts are provided by Lys336, Arg365, Ser366, and Lys387. Residue Lys336 is the Proton acceptor of the active site.

This sequence belongs to the enolase family. In terms of assembly, component of the RNA degradosome, a multiprotein complex involved in RNA processing and mRNA degradation. Mg(2+) is required as a cofactor.

It is found in the cytoplasm. Its subcellular location is the secreted. It localises to the cell surface. It catalyses the reaction (2R)-2-phosphoglycerate = phosphoenolpyruvate + H2O. Its pathway is carbohydrate degradation; glycolysis; pyruvate from D-glyceraldehyde 3-phosphate: step 4/5. Its function is as follows. Catalyzes the reversible conversion of 2-phosphoglycerate (2-PG) into phosphoenolpyruvate (PEP). It is essential for the degradation of carbohydrates via glycolysis. In Legionella pneumophila (strain Paris), this protein is Enolase.